The chain runs to 415 residues: D-serine dehydratase (415 aa).

Lys-68 bears the N6-(pyridoxal phosphate)lysine mark. 5 residues coordinate pyridoxal 5'-phosphate: Tyr-204, Tyr-211, Thr-253, Gly-279, and Asn-280. Residues His-385 and Cys-387 each coordinate Zn(2+).

It belongs to the DSD1 family. Homodimer. It depends on pyridoxal 5'-phosphate as a cofactor. The cofactor is Zn(2+).

It is found in the cytoplasm. Its subcellular location is the nucleus. The enzyme catalyses D-serine = pyruvate + NH4(+). In terms of biological role, catalyzes the conversion of D-serine to pyruvate and ammonia. May play a role in D-serine detoxification. This chain is D-serine dehydratase, found in Schizosaccharomyces pombe (strain 972 / ATCC 24843) (Fission yeast).